A 721-amino-acid chain; its full sequence is Polyribonucleotide nucleotidyltransferase (721 aa).

Mg(2+) contacts are provided by aspartate 495 and aspartate 501. The region spanning 562-621 (PRLLSFRIDPELIGTVIGPGGRTIKGITERTNTKIDIEDGGIVTIASHDGAAAEAAQRII) is the KH domain. The region spanning 631–699 (GEVFSGTITR…NRGRINLTLR (69 aa)) is the S1 motif domain. Residues 700–721 (GVPQNGEETQSEPAPTPVAPLN) form a disordered region.

This sequence belongs to the polyribonucleotide nucleotidyltransferase family. The cofactor is Mg(2+).

It is found in the cytoplasm. The enzyme catalyses RNA(n+1) + phosphate = RNA(n) + a ribonucleoside 5'-diphosphate. In terms of biological role, involved in mRNA degradation. Catalyzes the phosphorolysis of single-stranded polyribonucleotides processively in the 3'- to 5'-direction. This chain is Polyribonucleotide nucleotidyltransferase, found in Prochlorococcus marinus (strain MIT 9303).